Here is a 196-residue protein sequence, read N- to C-terminus: HTH-type transcriptional regulator EcpR (196 aa).

The region spanning 138–196 (KDIKKDKITDREMEIIRMTAQGMLPKSIARIENCSVKTVYTHRRNAEAKLYSKIYKLVP) is the HTH luxR-type domain. Residues 162 to 181 (PKSIARIENCSVKTVYTHRR) constitute a DNA-binding region (H-T-H motif).

It belongs to the EcpR/MatA family.

It is found in the cytoplasm. Its function is as follows. Part of the ecpRABCDE operon, which encodes the E.coli common pilus (ECP). ECP is found in both commensal and pathogenic strains and plays a dual role in early-stage biofilm development and host cell recognition. Positively regulates the expression of the ecp operon. The sequence is that of HTH-type transcriptional regulator EcpR (ecpR) from Escherichia coli O17:K52:H18 (strain UMN026 / ExPEC).